A 783-amino-acid chain; its full sequence is Glucosidase YgjK (783 aa).

An N-terminal signal peptide occupies residues 1–22 (MKIKTILTPVTCALLISFSAHA). The interval 24 to 254 (NADNYKNVIN…TTLYTTYSHL (231 aa)) is N-terminal domain. The linker stretch occupies residues 254–299 (LLTAQEVSKEQMQIRDILARPAFYLTASQQRWEEYLKKGLTNPDAT). An a domain region spans residues 300–783 (PEQTRVAVKA…MLYNDFFRKQ (484 aa)). Aspartate 454, asparagine 456, asparagine 458, valine 460, and glutamate 462 together coordinate Ca(2+). Aspartate 524 serves as the catalytic Proton donor. Glutamate 572 is a Ca(2+) binding site. The active-site Proton acceptor is glutamate 750.

This sequence belongs to the glycosyl hydrolase 63 family.

In terms of biological role, glucoside hydrolase that cleaves the alpha-1,3-glucosidic linkage in nigerose. Has very low activity towards maltooligosaccharides, soluble starch, nigerotriose, kojibiose and trehalose. The polypeptide is Glucosidase YgjK (ygjK) (Escherichia coli (strain K12)).